The primary structure comprises 296 residues: Adrenocorticotropic hormone receptor (296 aa).

Residues 1–23 (MKHIINSYEHTNDTARNNSDCPD) are Extracellular-facing. 2 N-linked (GlcNAc...) asparagine glycosylation sites follow: Asn-12 and Asn-17. Cystine bridges form between Cys-21–Cys-253 and Cys-245–Cys-251. Residues 24 to 49 (VVLPEEIFFTISVIGILENLIVLLAV) traverse the membrane as a helical segment. Residues 50–58 (IKNKNLQSP) lie on the Cytoplasmic side of the membrane. Residues 59-79 (MYFFICSLAISDMLGSLYKIL) traverse the membrane as a helical segment. Residues 80–104 (ENILIMFRNMGYLKPRGSFESTADD) lie on the Extracellular side of the membrane. The helical transmembrane segment at 105–126 (IIDCMFILSLLGSIFSLSVIAA) threads the bilayer. The Cytoplasmic segment spans residues 127–147 (DRYITIFHALQYHSIVTMRRT). A helical transmembrane segment spans residues 148 to 168 (IITLTIIWMFCTGSGITMVIF). Over 169–180 (SHHIPTVLTFTS) the chain is Extracellular. The chain crosses the membrane as a helical span at residues 181–199 (LFPLMLVFILCLYIHMFLL). Over 200-217 (ARSHARKISTLPRTNMKG) the chain is Cytoplasmic. A helical transmembrane segment spans residues 218-244 (AMTLTILLGVFIFCWAPFVLHVLLMTF). Topologically, residues 245-256 (CPNNPYCVCYMS) are extracellular. Residues 257 to 278 (LFQVNGMLIMCNAVIDPFIYAF) traverse the membrane as a helical segment. At 279-296 (RSPELRDAFKRMLFCNRY) the chain is on the cytoplasmic side. A lipid anchor (S-palmitoyl cysteine) is attached at Cys-293.

This sequence belongs to the G-protein coupled receptor 1 family. Homodimer. Interacts with corticotropin (ACTH). Interacts with MRAP; this interaction targets MC2R to the plasma membrane. Interacts with MRAP2; competing with MRAP for binding to MC2R and impairing the binding of corticotropin (ACTH). Post-translationally, ubiquitinated by MGRN1 that may be involved in post-endocytic trafficking and/or degradation of internalized receptor.

The protein localises to the cell membrane. Functionally, hormone receptor primarily expressed in adrenal cortex that plays a key role in regulating adrenocortical function. Upon corticotropin (ACTH) binding, facilitates the release of adrenal glucocorticoids, including cortisol and corticosterone. In addition, MC2R is required for fetal and neonatal adrenal gland development. Mechanistically, activates adenylate cyclase (cAMP), the MAPK cascade as well as the cAMP-dependent protein kinase A pathway leading to steroidogenic factor 1/NR5A1-mediated transcriptional activation. The polypeptide is Adrenocorticotropic hormone receptor (Mc2r) (Mus musculus (Mouse)).